The sequence spans 193 residues: Leucyl/phenylalanyl-tRNA--protein transferase (193 aa).

It belongs to the L/F-transferase family.

The protein resides in the cytoplasm. The catalysed reaction is N-terminal L-lysyl-[protein] + L-leucyl-tRNA(Leu) = N-terminal L-leucyl-L-lysyl-[protein] + tRNA(Leu) + H(+). It carries out the reaction N-terminal L-arginyl-[protein] + L-leucyl-tRNA(Leu) = N-terminal L-leucyl-L-arginyl-[protein] + tRNA(Leu) + H(+). It catalyses the reaction L-phenylalanyl-tRNA(Phe) + an N-terminal L-alpha-aminoacyl-[protein] = an N-terminal L-phenylalanyl-L-alpha-aminoacyl-[protein] + tRNA(Phe). Functionally, functions in the N-end rule pathway of protein degradation where it conjugates Leu, Phe and, less efficiently, Met from aminoacyl-tRNAs to the N-termini of proteins containing an N-terminal arginine or lysine. This chain is Leucyl/phenylalanyl-tRNA--protein transferase, found in Akkermansia muciniphila (strain ATCC BAA-835 / DSM 22959 / JCM 33894 / BCRC 81048 / CCUG 64013 / CIP 107961 / Muc).